Consider the following 508-residue polypeptide: Photosystem II CP47 reaction center protein (508 aa).

The next 6 membrane-spanning stretches (helical) occupy residues 21 to 36, 101 to 115, 140 to 156, 203 to 218, 237 to 252, and 457 to 472; these read AVHL…WAGS, IVLS…IWHW, GIHL…FGAF, IAAG…FHLS, VLSS…AFVV, and TFAL…HGAR.

It belongs to the PsbB/PsbC family. PsbB subfamily. PSII is composed of 1 copy each of membrane proteins PsbA, PsbB, PsbC, PsbD, PsbE, PsbF, PsbH, PsbI, PsbJ, PsbK, PsbL, PsbM, PsbT, PsbX, PsbY, PsbZ, Psb30/Ycf12, at least 3 peripheral proteins of the oxygen-evolving complex and a large number of cofactors. It forms dimeric complexes. The cofactor is Binds multiple chlorophylls. PSII binds additional chlorophylls, carotenoids and specific lipids..

The protein resides in the plastid. It localises to the chloroplast thylakoid membrane. In terms of biological role, one of the components of the core complex of photosystem II (PSII). It binds chlorophyll and helps catalyze the primary light-induced photochemical processes of PSII. PSII is a light-driven water:plastoquinone oxidoreductase, using light energy to abstract electrons from H(2)O, generating O(2) and a proton gradient subsequently used for ATP formation. In Anthoceros angustus (Hornwort), this protein is Photosystem II CP47 reaction center protein.